A 160-amino-acid chain; its full sequence is UPF0262 protein Oant_0325 (160 aa).

It belongs to the UPF0262 family.

This chain is UPF0262 protein Oant_0325, found in Brucella anthropi (strain ATCC 49188 / DSM 6882 / CCUG 24695 / JCM 21032 / LMG 3331 / NBRC 15819 / NCTC 12168 / Alc 37) (Ochrobactrum anthropi).